The following is a 243-amino-acid chain: tRNA (guanine-N(1)-)-methyltransferase (243 aa).

S-adenosyl-L-methionine contacts are provided by residues G108 and 127 to 132; that span reads LGDFVL.

It belongs to the RNA methyltransferase TrmD family. As to quaternary structure, homodimer.

The protein localises to the cytoplasm. The catalysed reaction is guanosine(37) in tRNA + S-adenosyl-L-methionine = N(1)-methylguanosine(37) in tRNA + S-adenosyl-L-homocysteine + H(+). Functionally, specifically methylates guanosine-37 in various tRNAs. The sequence is that of tRNA (guanine-N(1)-)-methyltransferase from Streptococcus equi subsp. zooepidemicus (strain H70).